The primary structure comprises 232 residues: Ribose-5-phosphate isomerase A (232 aa).

Substrate-binding positions include 31-34 (TGST), 87-90 (DGAD), and 100-103 (KGGG). Catalysis depends on Glu-109, which acts as the Proton acceptor. Lys-127 contributes to the substrate binding site.

It belongs to the ribose 5-phosphate isomerase family. Homodimer.

It catalyses the reaction aldehydo-D-ribose 5-phosphate = D-ribulose 5-phosphate. Its pathway is carbohydrate degradation; pentose phosphate pathway; D-ribose 5-phosphate from D-ribulose 5-phosphate (non-oxidative stage): step 1/1. Its function is as follows. Catalyzes the reversible conversion of ribose-5-phosphate to ribulose 5-phosphate. The sequence is that of Ribose-5-phosphate isomerase A from Bifidobacterium longum (strain DJO10A).